The following is a 232-amino-acid chain: 7-cyano-7-deazaguanine synthase (232 aa).

ATP is bound at residue 8-18 (FSGGQDSTTCL). The Zn(2+) site is built by Cys187, Cys196, Cys199, and Cys202.

The protein belongs to the QueC family. The cofactor is Zn(2+).

The enzyme catalyses 7-carboxy-7-deazaguanine + NH4(+) + ATP = 7-cyano-7-deazaguanine + ADP + phosphate + H2O + H(+). Its pathway is purine metabolism; 7-cyano-7-deazaguanine biosynthesis. In terms of biological role, catalyzes the ATP-dependent conversion of 7-carboxy-7-deazaguanine (CDG) to 7-cyano-7-deazaguanine (preQ(0)). This is 7-cyano-7-deazaguanine synthase from Vibrio vulnificus (strain YJ016).